We begin with the raw amino-acid sequence, 372 residues long: Glutamate 5-kinase (372 aa).

Residue Lys14 participates in ATP binding. The substrate site is built by Ser54, Asp141, and Asn153. Position 173-174 (173-174) interacts with ATP; that stretch reads TD. Positions 280–358 constitute a PUA domain; it reads AGAVVLDNGA…ADIAAILGFV (79 aa).

It belongs to the glutamate 5-kinase family.

Its subcellular location is the cytoplasm. It carries out the reaction L-glutamate + ATP = L-glutamyl 5-phosphate + ADP. Its pathway is amino-acid biosynthesis; L-proline biosynthesis; L-glutamate 5-semialdehyde from L-glutamate: step 1/2. Functionally, catalyzes the transfer of a phosphate group to glutamate to form L-glutamate 5-phosphate. The sequence is that of Glutamate 5-kinase from Janthinobacterium sp. (strain Marseille) (Minibacterium massiliensis).